A 616-amino-acid polypeptide reads, in one-letter code: MSEALDEKSFDAKSFLKTVTHQPGVYRMYDAVGDVIYVGKAKDLKKRLSSYFRINVAGEKTRALVKNICKVDVTVTHTETEALILEHNYIKLYLPKYNVLLRDDKSYPYIFLSNHHHPRLSIHRGTKKRKGEYFGPYPDAGAVRESLHLMQKLFPIRQCEDSVYANRSRPCLMYQIGRCLAPCVKELITEKDYEDQVSFARLFLQGKDRQVIASLVEKMEQASQSLNFEQAATFRDQIQALRRVQEQQFVSHDSEDDLDVIGIAHQNGMACIHALYIRQGKILGSRSYFPKMPSDAELTEVLSSFITQFYLNQAEGRVIPSVIILGENLGDDAAVITETLSDIAGRKIELKVNPRGNRARYLKLAQTNAMTALTSKLSHKMTIHERFSELRKALNLETISRMECFDISHTMGEKTVASCVVFNQEGPFKQDYRRYNITGITGGDDYAAMGQVLERRYGKPMEPEKIPDIIFIDGGRGQLSRAYNVVKPFMDEWPKQPLLIGIAKGVTRKAGLETLIFITGEEFSLPSDSPALHLIQHIRDESHNHAISGHRAQRAKVRKRSALEDVEGIGPKRRQALLKFMGGLHELKRASREEIAKVPGISKALAEKIYDALQHG.

In terms of domain architecture, GIY-YIG spans 21–99 (HQPGVYRMYD…IKLYLPKYNV (79 aa)). A UVR domain is found at 209-244 (RQVIASLVEKMEQASQSLNFEQAATFRDQIQALRRV).

Belongs to the UvrC family. Interacts with UvrB in an incision complex.

The protein resides in the cytoplasm. The UvrABC repair system catalyzes the recognition and processing of DNA lesions. UvrC both incises the 5' and 3' sides of the lesion. The N-terminal half is responsible for the 3' incision and the C-terminal half is responsible for the 5' incision. The polypeptide is UvrABC system protein C (Photobacterium profundum (strain SS9)).